The sequence spans 380 residues: Beta sliding clamp (380 aa).

This sequence belongs to the beta sliding clamp family. As to quaternary structure, forms a ring-shaped head-to-tail homodimer around DNA which binds and tethers DNA polymerases and other proteins to the DNA. The DNA replisome complex has a single clamp-loading complex (3 tau and 1 each of delta, delta', psi and chi subunits) which binds 3 Pol III cores (1 core on the leading strand and 2 on the lagging strand) each with a beta sliding clamp dimer. Additional proteins in the replisome are other copies of gamma, psi and chi, Ssb, DNA helicase and RNA primase.

Its subcellular location is the cytoplasm. Its function is as follows. Confers DNA tethering and processivity to DNA polymerases and other proteins. Acts as a clamp, forming a ring around DNA (a reaction catalyzed by the clamp-loading complex) which diffuses in an ATP-independent manner freely and bidirectionally along dsDNA. Initially characterized for its ability to contact the catalytic subunit of DNA polymerase III (Pol III), a complex, multichain enzyme responsible for most of the replicative synthesis in bacteria; Pol III exhibits 3'-5' exonuclease proofreading activity. The beta chain is required for initiation of replication as well as for processivity of DNA replication. The chain is Beta sliding clamp (dnaN) from Mycoplasma genitalium (strain ATCC 33530 / DSM 19775 / NCTC 10195 / G37) (Mycoplasmoides genitalium).